The chain runs to 238 residues: Deoxyribose-phosphate aldolase (238 aa).

Residue Asp-104 is the Proton donor/acceptor of the active site. The Schiff-base intermediate with acetaldehyde role is filled by Lys-168. The active-site Proton donor/acceptor is Lys-197.

It belongs to the DeoC/FbaB aldolase family. DeoC type 1 subfamily.

The protein localises to the cytoplasm. The enzyme catalyses 2-deoxy-D-ribose 5-phosphate = D-glyceraldehyde 3-phosphate + acetaldehyde. Its pathway is carbohydrate degradation; 2-deoxy-D-ribose 1-phosphate degradation; D-glyceraldehyde 3-phosphate and acetaldehyde from 2-deoxy-alpha-D-ribose 1-phosphate: step 2/2. Catalyzes a reversible aldol reaction between acetaldehyde and D-glyceraldehyde 3-phosphate to generate 2-deoxy-D-ribose 5-phosphate. The chain is Deoxyribose-phosphate aldolase from Bacteroides thetaiotaomicron (strain ATCC 29148 / DSM 2079 / JCM 5827 / CCUG 10774 / NCTC 10582 / VPI-5482 / E50).